Reading from the N-terminus, the 321-residue chain is tRNA pseudouridine synthase B (321 aa).

Residue Asp-47 is the Nucleophile of the active site.

Belongs to the pseudouridine synthase TruB family. Type 1 subfamily.

The enzyme catalyses uridine(55) in tRNA = pseudouridine(55) in tRNA. In terms of biological role, responsible for synthesis of pseudouridine from uracil-55 in the psi GC loop of transfer RNAs. This chain is tRNA pseudouridine synthase B, found in Shewanella baltica (strain OS185).